We begin with the raw amino-acid sequence, 802 residues long: Pyrophosphate-energized membrane proton pump 3 (802 aa).

6 helical membrane passes run L41–G61, P66–T86, Y118–F138, V160–V180, A206–Y226, and L246–L266. Residue K273 coordinates substrate. The Mg(2+) site is built by D276, D280, and D306. 5 helical membrane-spanning segments follow: residues F348–L368, M386–A406, W421–I441, I468–I491, and G511–L531. D541 and N568 together coordinate Mg(2+). 4 helical membrane passes run F577 to V597, V615 to A635, G686 to Y706, and V716 to N736. Mg(2+)-binding residues include D743 and D773. K776 is a substrate binding site. The helical transmembrane segment at S782–L802 threads the bilayer.

The protein belongs to the H(+)-translocating pyrophosphatase (TC 3.A.10) family. K(+)-insensitive subfamily. Monomer.

The protein resides in the golgi apparatus membrane. The catalysed reaction is diphosphate + H2O + H(+)(in) = 2 phosphate + 2 H(+)(out). The polypeptide is Pyrophosphate-energized membrane proton pump 3 (AVPL2) (Arabidopsis thaliana (Mouse-ear cress)).